We begin with the raw amino-acid sequence, 491 residues long: Pentatricopeptide repeat-containing protein At5g27460 (491 aa).

10 PPR repeats span residues Ser69 to Gln99, Ser105 to Met139, Ala142 to Val176, Thr177 to Arg211, Asn212 to Glu246, Gly248 to Met278, Asn283 to Val313, Ser318 to Gln348, Asp353 to Pro387, and Asn388 to Pro426.

It belongs to the PPR family. P subfamily.

This Arabidopsis thaliana (Mouse-ear cress) protein is Pentatricopeptide repeat-containing protein At5g27460.